The following is a 241-amino-acid chain: Probable WRKY transcription factor 63 (241 aa).

The interval 56–79 (NSPNRQPHHESSSRDMAGLVPQRS) is disordered. Residues 97-165 (SPNPRLDDGF…YLGQHTCKAF (69 aa)) constitute a DNA-binding region (WRKY).

It belongs to the WRKY group III family.

It localises to the nucleus. Functionally, transcription factor. Interacts specifically with the W box (5'-(T)TGAC[CT]-3'), a frequently occurring elicitor-responsive cis-acting element. In Arabidopsis thaliana (Mouse-ear cress), this protein is Probable WRKY transcription factor 63 (WRKY63).